An 809-amino-acid polypeptide reads, in one-letter code: MYEALPGPAPENEDGLVKVKEEDPTWEQVCNSQEGSSHTQEICRLRFRHFCYQEAHGPQEALAQLRELCHQWLRPEMHTKEQIMELLVLEQFLTILPKELQPCVKTYPLESGEEAVTVLENLETGSGDTGQQASVYIQGQDMHPMVAEYQGVSLECQSLQLLPGITTLKCEPPQRPQGNPQEVSGPVPHGSAHLQEKNPRDKAVVPVFNPVRSQTLVKTEEETAQAVAAEKWSHLSLTRRNLCGNSAQETVMSLSPMTEEIVTKDRLFKAKQETSEEMEQSGEASGKPNRECAPQIPCSTPIATERTVAHLNTLKDRHPGDLWARMHISSLEYAAGDITRKGRKKDKARVSELLQGLSFSGDSDVEKDNEPEIQPAQKKLKVSCFPEKSWTKRDIKPNFPSWSALDSGLLNLKSEKLNPVELFELFFDDETFNLIVNETNNYASQKNVSLEVTVQEMRCVFGVLLLSGFMRHPRREMYWEVSDTDQNLVRDAIRRDRFELIFSNLHFADNGHLDQKDKFTKLRPLIKQMNKNFLLYAPLEEYYCFDKSMCECFDSDQFLNGKPIRIGYKIWCGTTTQGYLVWFEPYQEESTMKVDEDPDLGLGGNLVMNFADVLLERGQYPYHLCFDSFFTSVKLLSALKKKGVRATGTIRENRTEKCPLMNVEHMKKMKRGYFDFRIEENNEIILCRWYGDGIISLCSNAVGIEPVNEVSCCDADNEEIPQISQPSIVKVYDECKEGVAKMDQIISKYRVRIRSKKWYSILVSYMIDVAMNNAWQLHRACNPGASLDPLDFRRFVAHFYLEHNAHLSD.

The 83-residue stretch at R44 to S126 folds into the SCAN box domain. Positions C170 to P199 are disordered. Residue K218 forms a Glycyl lysine isopeptide (Lys-Gly) (interchain with G-Cter in SUMO2) linkage. The interval K271–P297 is disordered. S360 carries the phosphoserine modification.

This chain is PiggyBac transposable element-derived protein 1 (PGBD1), found in Homo sapiens (Human).